Reading from the N-terminus, the 339-residue chain is D-erythrose-4-phosphate dehydrogenase (339 aa).

11 to 12 (RI) lines the NAD(+) pocket. Substrate contacts are provided by residues 158–160 (SCT), Arg-204, 217–218 (TK), and Arg-240. The active-site Nucleophile is the Cys-159. An NAD(+)-binding site is contributed by Asn-322.

This sequence belongs to the glyceraldehyde-3-phosphate dehydrogenase family. Epd subfamily. Homotetramer.

Its subcellular location is the cytoplasm. It catalyses the reaction D-erythrose 4-phosphate + NAD(+) + H2O = 4-phospho-D-erythronate + NADH + 2 H(+). It functions in the pathway cofactor biosynthesis; pyridoxine 5'-phosphate biosynthesis; pyridoxine 5'-phosphate from D-erythrose 4-phosphate: step 1/5. In terms of biological role, catalyzes the NAD-dependent conversion of D-erythrose 4-phosphate to 4-phosphoerythronate. This is D-erythrose-4-phosphate dehydrogenase from Aliivibrio fischeri (strain ATCC 700601 / ES114) (Vibrio fischeri).